Consider the following 7081-residue polypeptide: Leucine-rich repeat transmembrane protein CCDC168 (7081 aa).

Residues 37–57 (WVAIFFIILLGIIFEIILMKA) traverse the membrane as a helical segment. LRR repeat units lie at residues 233 to 256 (PCPL…VRNQ) and 420 to 445 (NAEF…SVKA). The tract at residues 717–745 (EDLQSSENSHLQLSNGEELPTSTPKTQRC) is disordered. The span at 718–742 (DLQSSENSHLQLSNGEELPTSTPKT) shows a compositional bias: polar residues. The stretch at 865–890 (ADTLRIIRLSHSASKQEKLPDEKETQ) is one LRR 3 repeat. A disordered region spans residues 943–1009 (QISSGSSKAP…DPKNPLTMPE (67 aa)). The segment covering 958–970 (VQPQTLSTQTILE) has biased composition (polar residues). A compositionally biased stretch (basic and acidic residues) spans 981–999 (QVEKVKQSTDRPTDRESAG). An LRR 4 repeat occupies 1050-1075 (LPAVALGSFNNHLLTLPYFKRQEIKK). 2 stretches are compositionally biased toward polar residues: residues 1274–1286 (KCTA…SPIS) and 1295–1304 (LNQTRESYIP). Residues 1274 to 1304 (KCTADSETPSPISGKSLIGDPLNQTRESYIP) form a disordered region. One copy of the LRR 5 repeat lies at 1501–1527 (NCLTLELHINGQRLQHQTGFEQTTLET). Composition is skewed to basic and acidic residues over residues 1773-1784 (ETEKDTLREKRL) and 1793-1804 (TSPHEDSITSRD). Disordered regions lie at residues 1773–1804 (ETEK…TSRD), 1954–1973 (KSPH…ESGS), 2008–2031 (STHQ…EGRS), and 2083–2103 (TGKS…NPRR). The segment covering 1964–1973 (ANLTDMESGS) has biased composition (polar residues). Residues 2373 to 2397 (KNQINTIQLSERKIILNPKCLTMKE) form an LRR 6 repeat. The disordered stretch occupies residues 2637–2680 (GRHSPASEEMKRQNGRLKMADRSSPQGRPLQAKQSAVSQSPDTA). The segment covering 2668–2678 (AKQSAVSQSPD) has biased composition (polar residues). LRR repeat units follow at residues 2727–2749 (SKIH…KTRA), 2832–2855 (IQQQ…VYDS), 2862–2889 (IKKL…KLEK), 3433–3458 (LSSR…RLEW), and 3630–3653 (ILSL…NVKS). The tract at residues 3730-3756 (SLSHSNSNSRTKAGKDKSGTLKGCLPP) is disordered. The stretch at 3875-3898 (MRGITRFCLSSSTQQELSDTMEKC) is one LRR 12 repeat. 8 disordered regions span residues 4119–4260 (ELSH…DGDK), 4293–4428 (QGII…KQET), 4729–4756 (QESL…LLPQ), 4794–4817 (SPLS…QDRT), 4831–4859 (MPSL…RLAN), 4928–4955 (GVQE…YLNC), 4966–4985 (LGKT…SDSG), and 5191–5212 (QKVK…SPLH). 6 stretches are compositionally biased toward basic and acidic residues: residues 4121 to 4133 (SHQK…EKAD), 4147 to 4176 (KAKD…DKGL), 4192 to 4245 (EPGK…EQQK), 4329 to 4361 (QKAK…DLKG), 4375 to 4401 (EPGK…NRDG), and 4415 to 4426 (EQEKRDGHKSKQ). Residues 4731–4743 (SLPSRQTAPTKPT) show a composition bias toward polar residues. Basic and acidic residues-rich tracts occupy residues 4746 to 4756 (LVKKEKQLLPQ) and 4798 to 4817 (KRKE…QDRT). Over residues 5203 to 5212 (KSPSRSSPLH) the composition is skewed to polar residues. The LRR 13 repeat unit spans residues 5311–5336 (LSQLELDKETHLGNEMLRLKRPILRR). The segment at 5467–5496 (LPDTEKTADAEARSGDVRKGKPHRSQKENR) is disordered. A compositionally biased stretch (basic and acidic residues) spans 5469–5496 (DTEKTADAEARSGDVRKGKPHRSQKENR). An LRR 14 repeat occupies 5522-5545 (LNAKELVLNINKLEKKVHKDKDEA). 2 disordered regions span residues 5564–5583 (LDSG…SSCP) and 5763–5792 (QQET…SNDR). Residues 5779 to 5792 (KFDKPKEDGQSNDR) show a composition bias toward basic and acidic residues. LRR repeat units lie at residues 5901 to 5924 (KQAL…LFPP), 6259 to 6282 (PDLR…ECPS), 6419 to 6442 (HLES…SLQM), 6552 to 6575 (HFSV…SYAM), and 6613 to 6637 (QIDL…TFPK). 2 disordered regions span residues 6859–6878 (CKSH…SPDW) and 6916–6950 (APLT…RSDL). Positions 6860–6871 (KSHKSRKYRSSS) are enriched in basic residues. Basic and acidic residues predominate over residues 6937–6950 (HPESQERKKARSDL). The stretch at 7012 to 7036 (NRPFFFACVPADSLEVIPKTIRWTI) is one LRR 20 repeat.

Its subcellular location is the membrane. This is Leucine-rich repeat transmembrane protein CCDC168 from Homo sapiens (Human).